The chain runs to 803 residues: Putative metal ion transporter C27B12.12c (803 aa).

Residues 1–20 show a composition bias toward polar residues; it reads MSFQQPSNGAQGGNNNALEK. The interval 1 to 255 is disordered; that stretch reads MSFQQPSNGA…SSDVSGSDEN (255 aa). Low complexity predominate over residues 21–45; the sequence is TSSNEATSSSSTQVSSLSASGISVS. Residues 58 to 82 show a composition bias toward polar residues; sequence MQVQSSQHLEANVQSPVSSQTTYAT. Basic residues-rich tracts occupy residues 105-123 and 152-166; these read KPKK…RKKI and QSNK…KHSP. 2 stretches are compositionally biased toward low complexity: residues 181 to 194 and 218 to 253; these read ALSA…QHAS and SSSS…SGSD. Ser-318 is modified (phosphoserine). 2 disordered regions span residues 326–349 and 406–431; these read PRLK…QVDE and FEPH…NNAE. Positions 337 to 347 are enriched in acidic residues; it reads DNEDREVDSQV. Positions 406–419 are enriched in basic and acidic residues; that stretch reads FEPHWNDLSPHDPN. The span at 420-430 shows a compositional bias: polar residues; the sequence is DPSSSLHSNNA. Residues Ser-449 and Ser-452 each carry the phosphoserine modification. 2 consecutive transmembrane segments (helical) span residues 745–765 and 776–796; these read ITLI…FGMN and LAWF…GWII.

It belongs to the CorA metal ion transporter (MIT) (TC 1.A.35) family.

The protein localises to the cytoplasm. It localises to the membrane. This Schizosaccharomyces pombe (strain 972 / ATCC 24843) (Fission yeast) protein is Putative metal ion transporter C27B12.12c.